The primary structure comprises 392 residues: Olfactomedin-like protein 3 (392 aa).

The first 21 residues, 1–21 (MGPWRCLLLLPLLAAAPRAQQ), serve as a signal peptide directing secretion. Positions 25–99 (MEYVERRLAL…REVDYLETQN (75 aa)) form a coiled coil. In terms of domain architecture, Olfactomedin-like spans 132–388 (DCSDTIASVR…QIIYRMEMKK (257 aa)). Cys-133 and Cys-315 form a disulfide bridge. Asn-175 and Asn-235 each carry an N-linked (GlcNAc...) asparagine glycan.

Belongs to the OLFML3 family.

It localises to the secreted. Functionally, secreted scaffold protein that plays an essential role in dorsoventral patterning during early development. Stabilizes axial formation by restricting chordin (CHRD) activity on the dorsal side. Acts by facilitating the association between the tolloid proteases and their substrate chordin (CHRD), leading to enhance chordin (CHRD) degradation. This is Olfactomedin-like protein 3 (OLFML3) from Gallus gallus (Chicken).